The following is a 389-amino-acid chain: GDSL esterase/lipase At5g14450 (389 aa).

The first 30 residues, 1-30 (MKDNLERAKLMVSSTVFSWLLLCLFAVTTS), serve as a signal peptide directing secretion. Residue S48 is the Nucleophile of the active site. Residues N125 and N335 are each glycosylated (N-linked (GlcNAc...) asparagine). Catalysis depends on residues D354 and H357.

This sequence belongs to the 'GDSL' lipolytic enzyme family.

The protein resides in the secreted. The polypeptide is GDSL esterase/lipase At5g14450 (Arabidopsis thaliana (Mouse-ear cress)).